A 210-amino-acid polypeptide reads, in one-letter code: Guanylate kinase (210 aa).

A Guanylate kinase-like domain is found at 5 to 184; that stretch reads GLLIVFSGPS…AAERVKHIIE (180 aa). 12-19 is an ATP binding site; sequence GPSGVGKG.

It belongs to the guanylate kinase family.

The protein resides in the cytoplasm. It carries out the reaction GMP + ATP = GDP + ADP. Its function is as follows. Essential for recycling GMP and indirectly, cGMP. This chain is Guanylate kinase, found in Streptococcus mutans serotype c (strain ATCC 700610 / UA159).